A 274-amino-acid polypeptide reads, in one-letter code: 3-methyl-2-oxobutanoate hydroxymethyltransferase (274 aa).

Asp49 and Asp88 together coordinate Mg(2+). 3-methyl-2-oxobutanoate is bound by residues 49–50 (DS), Asp88, and Lys118. Glu120 is a binding site for Mg(2+). Glu187 acts as the Proton acceptor in catalysis.

This sequence belongs to the PanB family. As to quaternary structure, homodecamer; pentamer of dimers. Mg(2+) is required as a cofactor.

The protein resides in the cytoplasm. It catalyses the reaction 3-methyl-2-oxobutanoate + (6R)-5,10-methylene-5,6,7,8-tetrahydrofolate + H2O = 2-dehydropantoate + (6S)-5,6,7,8-tetrahydrofolate. Its pathway is cofactor biosynthesis; (R)-pantothenate biosynthesis; (R)-pantoate from 3-methyl-2-oxobutanoate: step 1/2. Catalyzes the reversible reaction in which hydroxymethyl group from 5,10-methylenetetrahydrofolate is transferred onto alpha-ketoisovalerate to form ketopantoate. This Paramagnetospirillum magneticum (strain ATCC 700264 / AMB-1) (Magnetospirillum magneticum) protein is 3-methyl-2-oxobutanoate hydroxymethyltransferase.